The following is a 103-amino-acid chain: 6-pyruvoyl tetrahydrobiopterin synthase (103 aa).

Position 1 is an N-acetylalanine (Ala-1). His-27 lines the Zn(2+) pocket. Catalysis depends on charge relay system residues His-53 and Glu-92.

The protein belongs to the PTPS family. Homohexamer formed of two homotrimers in a head to head fashion. Zn(2+) is required as a cofactor.

It catalyses the reaction 7,8-dihydroneopterin 3'-triphosphate = 6-pyruvoyl-5,6,7,8-tetrahydropterin + triphosphate + H(+). The protein operates within cofactor biosynthesis; tetrahydrobiopterin biosynthesis; tetrahydrobiopterin from 7,8-dihydroneopterin triphosphate: step 1/3. Involved in the biosynthesis of tetrahydrobiopterin, an essential cofactor of aromatic amino acid hydroxylases. Catalyzes the transformation of 7,8-dihydroneopterin triphosphate into 6-pyruvoyl tetrahydropterin. This is 6-pyruvoyl tetrahydrobiopterin synthase (pts) from Salmo salar (Atlantic salmon).